The primary structure comprises 174 residues: 3-hydroxyanthranilate 3,4-dioxygenase (174 aa).

Arginine 47 is an O2 binding site. Histidine 51, glutamate 57, and histidine 95 together coordinate Fe cation. Glutamate 57 contacts substrate. 2 residues coordinate substrate: arginine 99 and glutamate 110. Positions 125, 128, 162, and 165 each coordinate Fe cation.

This sequence belongs to the 3-HAO family. Homodimer. The cofactor is Fe(2+).

It catalyses the reaction 3-hydroxyanthranilate + O2 = (2Z,4Z)-2-amino-3-carboxymuconate 6-semialdehyde. The protein operates within cofactor biosynthesis; NAD(+) biosynthesis; quinolinate from L-kynurenine: step 3/3. In terms of biological role, catalyzes the oxidative ring opening of 3-hydroxyanthranilate to 2-amino-3-carboxymuconate semialdehyde, which spontaneously cyclizes to quinolinate. This is 3-hydroxyanthranilate 3,4-dioxygenase from Paraburkholderia phytofirmans (strain DSM 17436 / LMG 22146 / PsJN) (Burkholderia phytofirmans).